The chain runs to 254 residues: Sugar fermentation stimulation protein homolog (254 aa).

The protein belongs to the SfsA family.

The polypeptide is Sugar fermentation stimulation protein homolog (Parasynechococcus marenigrum (strain WH8102)).